A 389-amino-acid polypeptide reads, in one-letter code: Large envelope protein (389 aa).

Met1 is modified (N-acetylmethionine). The N-myristoyl glycine; by host moiety is linked to residue Gly2. The segment at 2–108 (GTNLSVPNPL…PPLRDTHPQA (107 aa)) is pre-S1. Residues 2–163 (GTNLSVPNPL…LSKTGDPVPN (162 aa)) are pre-S. The Virion surface; in external conformation portion of the chain corresponds to 2–170 (GTNLSVPNPL…VPNMENIASG (169 aa)). Topologically, residues 2–242 (GTNLSVPNPL…PGYRWMCLRR (241 aa)) are intravirion; in internal conformation. Positions 73-107 (ILTSVPAAPPPASTNRQSGRQPTPLSPPLRDTHPQ) are disordered. The segment covering 85 to 95 (STNRQSGRQPT) has biased composition (polar residues). A pre-S2 region spans residues 109–163 (MQWNSTTFHQTLQDPRVRALYFPAGGSSSGTVSPAQNTVSAISSILSKTGDPVPN). The helical transmembrane segment at 171-191 (LLGPLLVLQAGFFLLTKILTI) threads the bilayer. Residues 192–242 (PQSLDSWWTSLNFLGGTPVCLGQNSQSQISSHSPTCCPPICPGYRWMCLRR) are Intravirion; in external conformation-facing. A helical transmembrane segment spans residues 243–263 (FIIFLCILLLCLIFLLVLLDY). At 264–337 (QGMLPVCPLI…WASVRFSWLS (74 aa)) the chain is on the virion surface side. Asn309 is a glycosylation site (N-linked (GlcNAc...) asparagine; by host). The chain crosses the membrane as a helical span at residues 338–358 (LLVPFVQWFVGLSPTVWLSVI). At 359 to 364 (WMMWYW) the chain is on the intravirion side. Residues 365–387 (GPSLYNILSPFMPLLPIFFCLWV) traverse the membrane as a helical segment. The Virion surface portion of the chain corresponds to 388–389 (YI).

Belongs to the orthohepadnavirus major surface antigen family. As to quaternary structure, interacts (via its myristoylated pre-S1 region) with the host SLC10A1/NTCP; this interaction is essential for viral entry. In its internal form (Li-HBsAg), interacts with the capsid protein and with the isoform S. Interacts with host chaperone CANX. In terms of assembly, associates with host chaperone CANX through its pre-S2 N glycan; this association may be essential for isoform M proper secretion. As to quaternary structure, interacts with isoform L. Interacts with the antigens of satellite virus HDV (HDVAgs); this interaction is required for encapsidation of HDV genomic RNA. Isoform M is N-terminally acetylated by host at a ratio of 90%, and N-glycosylated by host at the pre-S2 region. In terms of processing, myristoylated; this modification is essential for its interaction with the host protein SLC10A1/NTCP.

It is found in the virion membrane. Functionally, the large envelope protein exists in two topological conformations, one which is termed 'external' or Le-HBsAg and the other 'internal' or Li-HBsAg. In its external conformation the protein attaches the virus to cell receptors and thereby initiating infection. This interaction determines the species specificity and liver tropism. This attachment induces virion internalization predominantly through caveolin-mediated endocytosis. The large envelope protein also assures fusion between virion membrane and endosomal membrane. In its internal conformation the protein plays a role in virion morphogenesis and mediates the contact with the nucleocapsid like a matrix protein. The middle envelope protein plays an important role in the budding of the virion. It is involved in the induction of budding in a nucleocapsid independent way. In this process the majority of envelope proteins bud to form subviral lipoprotein particles of 22 nm of diameter that do not contain a nucleocapsid. The chain is Large envelope protein from Hepatitis B virus genotype B1 subtype adw (isolate Japan/pJDW233/1988) (HBV-B).